Reading from the N-terminus, the 281-residue chain is MKRVVVVTGLSGAGKTTAMGFLEDLGYFCVDNVPGSILEELLKLFMSSDLEKMAIAVDVRSEHFSDPVEAIEKIKKKTNALIVFLEASKEELLRRYALTRRRHPLQRNDVGLEEAIEKERQILLPIKEMADFVIDTTKMTSHQLREILGQSLMNQSGGISVRILSFGFKHGIPMDADFIFDARFLPNPHYVPELSHKTGLDREVEEYFKKYSLVDEFVYKIFEVVNVAVKEYQRSGRRIVTVGIGCTGGRHRSVYIAHKIAEMLKKEGFSVVEKHRDLEKV.

9–16 (GLSGAGKT) lines the ATP pocket. 58-61 (DVRS) serves as a coordination point for GTP.

It belongs to the RapZ-like family.

Functionally, displays ATPase and GTPase activities. This is Nucleotide-binding protein CTN_0898 from Thermotoga neapolitana (strain ATCC 49049 / DSM 4359 / NBRC 107923 / NS-E).